Consider the following 314-residue polypeptide: Ribosomal protein L11 methyltransferase (314 aa).

Positions 164, 185, 207, and 249 each coordinate S-adenosyl-L-methionine.

Belongs to the methyltransferase superfamily. PrmA family.

The protein resides in the cytoplasm. It catalyses the reaction L-lysyl-[protein] + 3 S-adenosyl-L-methionine = N(6),N(6),N(6)-trimethyl-L-lysyl-[protein] + 3 S-adenosyl-L-homocysteine + 3 H(+). Methylates ribosomal protein L11. The protein is Ribosomal protein L11 methyltransferase of Clostridium beijerinckii (strain ATCC 51743 / NCIMB 8052) (Clostridium acetobutylicum).